Consider the following 295-residue polypeptide: UDP-N-acetylenolpyruvoylglucosamine reductase (295 aa).

One can recognise an FAD-binding PCMH-type domain in the interval 23-188 (KVGGPADFLA…ISAKFALKPG (166 aa)). Arg167 is a catalytic residue. The active-site Proton donor is Ser217. Glu287 is an active-site residue.

This sequence belongs to the MurB family. FAD is required as a cofactor.

It localises to the cytoplasm. It carries out the reaction UDP-N-acetyl-alpha-D-muramate + NADP(+) = UDP-N-acetyl-3-O-(1-carboxyvinyl)-alpha-D-glucosamine + NADPH + H(+). The protein operates within cell wall biogenesis; peptidoglycan biosynthesis. In terms of biological role, cell wall formation. The chain is UDP-N-acetylenolpyruvoylglucosamine reductase from Streptococcus pyogenes serotype M12 (strain MGAS9429).